The chain runs to 687 residues: Bifunctional lysine-specific demethylase and histidyl-hydroxylase NO66 (687 aa).

The tract at residues 1-174 is disordered; the sequence is MSDKNKKVSA…RSCPLPSKKN (174 aa). Residues 23 to 32 show a composition bias toward basic and acidic residues; the sequence is DVQKGTKNSD. Composition is skewed to low complexity over residues 33 to 50 and 58 to 74; these read KNGA…SKNG and KKNG…SSSS. Residues 75–96 are compositionally biased toward acidic residues; it reads GEDEEDDSTDSSDEYESSESGE. 2 stretches are compositionally biased toward polar residues: residues 100–116 and 136–156; these read LNSH…ANTR and RTSS…QQPK. The JmjC domain occupies 347–483; sequence NPSSYLVQLR…NLMEKLMPLV (137 aa). His387, Asp389, and His449 together coordinate Fe cation.

Belongs to the ROX family. NO66 subfamily. Requires Fe(2+) as cofactor.

The protein localises to the nucleus. It catalyses the reaction N(6),N(6)-dimethyl-L-lysyl(36)-[histone H3] + 2 2-oxoglutarate + 2 O2 = L-lysyl(36)-[histone H3] + 2 formaldehyde + 2 succinate + 2 CO2. Oxygenase that can act as both a histone lysine demethylase and a ribosomal histidine hydroxylase. Specifically demethylates 'Lys-4' (H3K4me) and 'Lys-36' (H3K36me) of histone H3, thereby playing a central role in histone code. This Drosophila persimilis (Fruit fly) protein is Bifunctional lysine-specific demethylase and histidyl-hydroxylase NO66.